The following is a 461-amino-acid chain: Cysteine--tRNA ligase (461 aa).

Cys-28 lines the Zn(2+) pocket. Positions 30 to 40 (ITVYDLCHIGH) match the 'HIGH' region motif. Residues Cys-209, His-234, and Glu-238 each contribute to the Zn(2+) site. Residues 266-270 (KMSKS) carry the 'KMSKS' region motif. Lys-269 lines the ATP pocket.

It belongs to the class-I aminoacyl-tRNA synthetase family. In terms of assembly, monomer. Zn(2+) is required as a cofactor.

It is found in the cytoplasm. The catalysed reaction is tRNA(Cys) + L-cysteine + ATP = L-cysteinyl-tRNA(Cys) + AMP + diphosphate. This Pectobacterium carotovorum subsp. carotovorum (strain PC1) protein is Cysteine--tRNA ligase.